The following is a 311-amino-acid chain: 4-hydroxy-tetrahydrodipicolinate synthase (311 aa).

Thr-49 is a binding site for pyruvate. The active-site Proton donor/acceptor is Tyr-138. Lys-166 functions as the Schiff-base intermediate with substrate in the catalytic mechanism. Ile-207 provides a ligand contact to pyruvate.

The protein belongs to the DapA family. Homotetramer; dimer of dimers.

The protein localises to the cytoplasm. It catalyses the reaction L-aspartate 4-semialdehyde + pyruvate = (2S,4S)-4-hydroxy-2,3,4,5-tetrahydrodipicolinate + H2O + H(+). It functions in the pathway amino-acid biosynthesis; L-lysine biosynthesis via DAP pathway; (S)-tetrahydrodipicolinate from L-aspartate: step 3/4. Catalyzes the condensation of (S)-aspartate-beta-semialdehyde [(S)-ASA] and pyruvate to 4-hydroxy-tetrahydrodipicolinate (HTPA). This is 4-hydroxy-tetrahydrodipicolinate synthase from Limosilactobacillus fermentum (strain NBRC 3956 / LMG 18251) (Lactobacillus fermentum).